Here is a 122-residue protein sequence, read N- to C-terminus: Large ribosomal subunit protein uL14 (122 aa).

The protein belongs to the universal ribosomal protein uL14 family. Part of the 50S ribosomal subunit. Forms a cluster with proteins L3 and L19. In the 70S ribosome, L14 and L19 interact and together make contacts with the 16S rRNA in bridges B5 and B8.

Its function is as follows. Binds to 23S rRNA. Forms part of two intersubunit bridges in the 70S ribosome. The polypeptide is Large ribosomal subunit protein uL14 (Pelagibacter ubique (strain HTCC1062)).